Consider the following 482-residue polypeptide: Anthocyanin 3'-O-beta-glucosyltransferase (482 aa).

The active-site Proton acceptor is the H16. Residue H16 coordinates an anthocyanidin. Residue D119 is the Charge relay of the active site. UDP-alpha-D-glucose is bound by residues A349, Q351, H366, W369, N370, S371, and E374. Residue A389 coordinates an anthocyanidin. UDP-alpha-D-glucose-binding residues include E390 and Q391.

It belongs to the UDP-glycosyltransferase family. Post-translationally, the N-terminus is blocked. Abundant in petals and barely detected in leaves.

The enzyme catalyses delphinidin 3,5-bis-O-beta-D-glucoside + UDP-alpha-D-glucose = delphinidin 3,3',5-tri-O-beta-D-glucoside + UDP + H(+). Specifically glucosylates the 3'-hydroxy group of delphinidin 3,5-di-O-glucoside to produce gentiodelphin. Shows a strict specificity for UDP-glucose as donor. The protein is Anthocyanin 3'-O-beta-glucosyltransferase of Gentiana triflora (Clustered gentian).